Consider the following 295-residue polypeptide: Deleted in azoospermia-like (295 aa).

The segment covering 1 to 10 has biased composition (polar residues); sequence MSTANPETPN. Positions 1–25 are disordered; sequence MSTANPETPNSTISREASTQSSSAA. Positions 11–25 are enriched in low complexity; the sequence is STISREASTQSSSAA. The region spanning 40–115 is the RRM domain; the sequence is NTVFVGGIDV…KKLKLGPAIR (76 aa). The homodimerization stretch occupies residues 80–132; the sequence is KGYGFVSFFNDVDVQKIVESQINFHGKKLKLGPAIRKQNLCAYHVQPRPLVFN. The DAZ domain occupies 167–190; sequence AYPTYPNSPVQVITGYQLPVYNYQ. Tyrosine 276 is subject to Phosphotyrosine.

It belongs to the RRM DAZ family. Homodimer and heterodimer. Multiple DAZL RRMs can bind to a single RNA containing multiple GUU triplets. Forms a heterodimer with DAZ. Interacts with BOLL, DAZAP1 and DAZAP2. Interacts with PUM2. Testis specific.

The protein localises to the cytoplasm. The protein resides in the nucleus. Functionally, RNA-binding protein, which is essential for gametogenesis in both males and females. Plays a central role during spermatogenesis. Acts by binding to the 3'-UTR of mRNA, specifically recognizing GUU triplets, and thereby regulating the translation of key transcripts. The sequence is that of Deleted in azoospermia-like (DAZL) from Homo sapiens (Human).